We begin with the raw amino-acid sequence, 589 residues long: Polypeptide N-acetylgalactosaminyltransferase 4 (589 aa).

Over 1 to 11 (MLPRMLKMKTV) the chain is Cytoplasmic. A helical; Signal-anchor for type II membrane protein transmembrane segment spans residues 12 to 31 (GTVLAVIWLFGLAFIYVQST). Residues 32 to 589 (SSSLRPPGRH…WIFEKLDTYE (558 aa)) lie on the Lumenal side of the membrane. The disordered stretch occupies residues 33 to 73 (SSLRPPGRHPPPLPQLDPLIPQNPPQNDEIRPKKSAPPIPT). Disulfide bonds link cysteine 140–cysteine 369, cysteine 360–cysteine 438, cysteine 471–cysteine 488, cysteine 514–cysteine 531, and cysteine 553–cysteine 571. A catalytic subdomain A region spans residues 150–255 (MQPTTVIITY…QKWLEPLLAR (106 aa)). Substrate is bound by residues aspartate 191 and arginine 216. Aspartate 239 contributes to the Mn(2+) binding site. A substrate-binding site is contributed by serine 240. Histidine 241 contacts Mn(2+). Positions 315–377 (PIRSPTMAGG…PCSRVGHVFR (63 aa)) are catalytic subdomain B. Tryptophan 346 contacts substrate. Histidine 374 is a Mn(2+) binding site. Arginine 377, histidine 380, and tyrosine 382 together coordinate substrate. A Ricin B-type lectin domain is found at 458–589 (TPGKSFQMKI…WIFEKLDTYE (132 aa)). The N-linked (GlcNAc...) asparagine glycan is linked to asparagine 523.

This sequence belongs to the glycosyltransferase 2 family. GalNAc-T subfamily. The cofactor is Mn(2+).

The protein resides in the golgi apparatus membrane. It carries out the reaction L-seryl-[protein] + UDP-N-acetyl-alpha-D-galactosamine = a 3-O-[N-acetyl-alpha-D-galactosaminyl]-L-seryl-[protein] + UDP + H(+). The catalysed reaction is L-threonyl-[protein] + UDP-N-acetyl-alpha-D-galactosamine = a 3-O-[N-acetyl-alpha-D-galactosaminyl]-L-threonyl-[protein] + UDP + H(+). Its pathway is protein modification; protein glycosylation. Catalyzes the initial reaction in O-linked oligosaccharide biosynthesis, the transfer of an N-acetyl-D-galactosamine residue to a serine or threonine residue on the protein receptor. The chain is Polypeptide N-acetylgalactosaminyltransferase 4 (gly-4) from Caenorhabditis elegans.